The chain runs to 270 residues: S-adenosylmethionine decarboxylase proenzyme (270 aa).

Residue Ser-120 is the Schiff-base intermediate with substrate; via pyruvic acid of the active site. Ser-120 bears the Pyruvic acid (Ser); by autocatalysis mark. The active-site Proton acceptor; for processing activity is the His-125. The Proton donor; for catalytic activity role is filled by Cys-148.

Belongs to the prokaryotic AdoMetDC family. Type 2 subfamily. In terms of assembly, heterooctamer of four alpha and four beta chains arranged as a tetramer of alpha/beta heterodimers. It depends on pyruvate as a cofactor. Is synthesized initially as an inactive proenzyme. Formation of the active enzyme involves a self-maturation process in which the active site pyruvoyl group is generated from an internal serine residue via an autocatalytic post-translational modification. Two non-identical subunits are generated from the proenzyme in this reaction, and the pyruvate is formed at the N-terminus of the alpha chain, which is derived from the carboxyl end of the proenzyme. The post-translation cleavage follows an unusual pathway, termed non-hydrolytic serinolysis, in which the side chain hydroxyl group of the serine supplies its oxygen atom to form the C-terminus of the beta chain, while the remainder of the serine residue undergoes an oxidative deamination to produce ammonia and the pyruvoyl group blocking the N-terminus of the alpha chain.

It catalyses the reaction S-adenosyl-L-methionine + H(+) = S-adenosyl 3-(methylsulfanyl)propylamine + CO2. Its pathway is amine and polyamine biosynthesis; S-adenosylmethioninamine biosynthesis; S-adenosylmethioninamine from S-adenosyl-L-methionine: step 1/1. Its function is as follows. Catalyzes the decarboxylation of S-adenosylmethionine to S-adenosylmethioninamine (dcAdoMet), the propylamine donor required for the synthesis of the polyamines spermine and spermidine from the diamine putrescine. This is S-adenosylmethionine decarboxylase proenzyme from Alkaliphilus oremlandii (strain OhILAs) (Clostridium oremlandii (strain OhILAs)).